Consider the following 59-residue polypeptide: Large ribosomal subunit protein bL32 (59 aa).

A disordered region spans residues 1–20; that stretch reads MAVPRNRHSNARKNIRRSHH.

Belongs to the bacterial ribosomal protein bL32 family.

This is Large ribosomal subunit protein bL32 (rpmF) from Chlamydia muridarum (strain MoPn / Nigg).